The following is a 101-amino-acid chain: uncharacterized protein (101 aa).

This is an uncharacterized protein from Sulfolobus islandicus filamentous virus (isolate Iceland/Hveragerdi) (SIFV).